Here is a 435-residue protein sequence, read N- to C-terminus: C4-dicarboxylate transport protein (435 aa).

9 helical membrane-spanning segments follow: residues 4 to 24 (SLFK…ILLG), 44 to 64 (LIKM…IAGM), 76 to 96 (VALL…LIIV), 142 to 162 (IGAF…LFGF), 184 to 204 (VIFG…FGAM), 222 to 242 (LIIC…GTIA), 289 to 309 (VVGL…SIYL), 326 to 346 (IFHQ…VAGV), and 352 to 372 (IVLA…LALI).

The protein belongs to the dicarboxylate/amino acid:cation symporter (DAACS) (TC 2.A.23) family.

The protein localises to the cell inner membrane. Functionally, responsible for the transport of dicarboxylates such as succinate, fumarate, and malate from the periplasm across the membrane. This chain is C4-dicarboxylate transport protein, found in Salmonella paratyphi A (strain ATCC 9150 / SARB42).